A 617-amino-acid chain; its full sequence is Probable Xaa-Pro aminopeptidase P (617 aa).

Residues Asp-414, Asp-425, Glu-523, and Glu-537 each coordinate Mn(2+).

Belongs to the peptidase M24B family. Mn(2+) is required as a cofactor.

It carries out the reaction Release of any N-terminal amino acid, including proline, that is linked to proline, even from a dipeptide or tripeptide.. Its function is as follows. Catalyzes the removal of a penultimate prolyl residue from the N-termini of peptides. The protein is Probable Xaa-Pro aminopeptidase P (AMPP) of Ajellomyces dermatitidis (strain ER-3 / ATCC MYA-2586) (Blastomyces dermatitidis).